Here is a 118-residue protein sequence, read N- to C-terminus: Large ribosomal subunit protein bL20 (118 aa).

The protein belongs to the bacterial ribosomal protein bL20 family.

Functionally, binds directly to 23S ribosomal RNA and is necessary for the in vitro assembly process of the 50S ribosomal subunit. It is not involved in the protein synthesizing functions of that subunit. The polypeptide is Large ribosomal subunit protein bL20 (Proteus mirabilis (strain HI4320)).